Consider the following 396-residue polypeptide: Serine/threonine-protein kinase VRK1 (396 aa).

The region spanning 37–317 (WKLGSPIGQG…LLDYVEKPLY (281 aa)) is the Protein kinase domain. ATP contacts are provided by residues 43 to 51 (IGQGGFGCI) and Lys-71. A Glycyl lysine isopeptide (Lys-Gly) (interchain with G-Cter in SUMO2) cross-link involves residue Lys-71. Asp-177 functions as the Proton acceptor in the catalytic mechanism. The disordered stretch occupies residues 352 to 396 (KPVAKKRKKEAEESVESSVEDMECSDKQTEEATQTRSKTRKRVQK). Residues 364 to 374 (ESVESSVEDME) show a composition bias toward acidic residues. At Ser-376 the chain carries Phosphoserine. Residues 387-393 (RSKTRKR) are required for interaction with the nucleosome.

It belongs to the protein kinase superfamily. CK1 Ser/Thr protein kinase family. VRK subfamily. Interacts with HDAC1, KAT2B, SETDB1, KDM3A and KDM4A. Associates with the nucleosome through interactions with nucleosome DNA, histone H2A and histone H2B; the interaction with H2A and H2B is mediated by the nucleosome acidic patch, a cluster of negatively charged residues of H2A and H2B forming a cleft within the nucleosome core. Autophosphorylated at various serine and threonine residues. Autophosphorylation does not impair its ability to phosphorylate p53/TP53. Phosphorylation by PLK3 leads to induction of Golgi fragmentation during mitosis.

The protein resides in the nucleus. Its subcellular location is the cytoplasm. It localises to the cajal body. The enzyme catalyses L-seryl-[protein] + ATP = O-phospho-L-seryl-[protein] + ADP + H(+). The catalysed reaction is L-threonyl-[protein] + ATP = O-phospho-L-threonyl-[protein] + ADP + H(+). Its activity is regulated as follows. Active in presence of Mn(2+), Mg(2+) and Zn(2+), but is not functional with Ca(2+) or Cu(2+). Has a higher affinity for Mn(2+) than for Mg(2+). RAN inhibits its autophosphorylation and its ability to phosphorylate histone H3. In terms of biological role, serine/threonine kinase involved in the regulation of key cellular processes including the cell cycle, nuclear condensation, transcription regulation, and DNA damage response. Controls chromatin organization and remodeling by mediating phosphorylation of histone H3 on 'Thr-4' and histone H2AX (H2aXT4ph). It also phosphorylates KAT5 in response to DNA damage, promoting KAT5 association with chromatin and histone acetyltransferase activity. Is involved in the regulation of cell cycle progression of neural progenitors, and is required for proper cortical neuronal migration. Is involved in neurite elongation and branching in motor neurons, and has an essential role in Cajal bodies assembly, acting through COIL phosphorylation and the control of coilin degradation. Involved in Golgi disassembly during the cell cycle: following phosphorylation by PLK3 during mitosis, it is required to induce Golgi fragmentation. Phosphorylates BANF1: disrupts its ability to bind DNA, reduces its binding to LEM domain-containing proteins and causes its relocalization from the nucleus to the cytoplasm. Phosphorylates TP53BP1 and p53/TP53 on 'Thr-18', preventing the interaction between p53/TP53 and MDM2. Phosphorylates ATF2 which activates its transcriptional activity. Phosphorylates JUN. This is Serine/threonine-protein kinase VRK1 (VRK1) from Bos taurus (Bovine).